We begin with the raw amino-acid sequence, 210 residues long: MFSNIFSFDRNFYNKGFYPVAGIDEAGRGPLAGPVVAAVVILPKDSAIPYLNDSKQLSEKKREILFEIIKETALDYAVELVNNEIIDEINILQATFLAMSRAVLKLKTQPDLYLIDGNRKVHGLSFNQETIVGGDAKSACIAAASILAKVSRDKMMLEYAKQYPVYEFEKHKGYGTKKHIEALKKHGICPIHRLTFSPVNDIISQTKLNI.

The RNase H type-2 domain occupies 18 to 208 (YPVAGIDEAG…VNDIISQTKL (191 aa)). The a divalent metal cation site is built by aspartate 24, glutamate 25, and aspartate 116.

The protein belongs to the RNase HII family. The cofactor is Mn(2+). It depends on Mg(2+) as a cofactor.

It is found in the cytoplasm. The catalysed reaction is Endonucleolytic cleavage to 5'-phosphomonoester.. Its function is as follows. Endonuclease that specifically degrades the RNA of RNA-DNA hybrids. The chain is Ribonuclease HII from Endomicrobium trichonymphae.